Reading from the N-terminus, the 406-residue chain is 2,3-bisphosphoglycerate-independent phosphoglycerate mutase (406 aa).

The protein belongs to the BPG-independent phosphoglycerate mutase family. A-PGAM subfamily.

The enzyme catalyses (2R)-2-phosphoglycerate = (2R)-3-phosphoglycerate. It functions in the pathway carbohydrate degradation; glycolysis; pyruvate from D-glyceraldehyde 3-phosphate: step 3/5. Catalyzes the interconversion of 2-phosphoglycerate and 3-phosphoglycerate. This is 2,3-bisphosphoglycerate-independent phosphoglycerate mutase from Methanococcus vannielii (strain ATCC 35089 / DSM 1224 / JCM 13029 / OCM 148 / SB).